A 307-amino-acid chain; its full sequence is Methionyl-tRNA formyltransferase (307 aa).

Residue 109–112 (SMLP) participates in (6S)-5,6,7,8-tetrahydrofolate binding.

The protein belongs to the Fmt family.

It carries out the reaction L-methionyl-tRNA(fMet) + (6R)-10-formyltetrahydrofolate = N-formyl-L-methionyl-tRNA(fMet) + (6S)-5,6,7,8-tetrahydrofolate + H(+). Its function is as follows. Attaches a formyl group to the free amino group of methionyl-tRNA(fMet). The formyl group appears to play a dual role in the initiator identity of N-formylmethionyl-tRNA by promoting its recognition by IF2 and preventing the misappropriation of this tRNA by the elongation apparatus. The protein is Methionyl-tRNA formyltransferase of Orientia tsutsugamushi (strain Boryong) (Rickettsia tsutsugamushi).